Reading from the N-terminus, the 1072-residue chain is DNA-directed RNA polymerase subunit beta (1072 aa).

The protein belongs to the RNA polymerase beta chain family. As to quaternary structure, in plastids the minimal PEP RNA polymerase catalytic core is composed of four subunits: alpha, beta, beta', and beta''. When a (nuclear-encoded) sigma factor is associated with the core the holoenzyme is formed, which can initiate transcription.

The protein localises to the plastid. The protein resides in the chloroplast. It carries out the reaction RNA(n) + a ribonucleoside 5'-triphosphate = RNA(n+1) + diphosphate. In terms of biological role, DNA-dependent RNA polymerase catalyzes the transcription of DNA into RNA using the four ribonucleoside triphosphates as substrates. The protein is DNA-directed RNA polymerase subunit beta of Olimarabidopsis pumila (Dwarf rocket).